We begin with the raw amino-acid sequence, 128 residues long: Large-conductance mechanosensitive channel (128 aa).

Helical transmembrane passes span 10–30 (FAMRGNVVDMAVGVIIGSAFG) and 76–96 (GLFIQNVIDFIIIAFAIFMMI).

This sequence belongs to the MscL family. Homopentamer.

The protein localises to the cell inner membrane. Its function is as follows. Channel that opens in response to stretch forces in the membrane lipid bilayer. May participate in the regulation of osmotic pressure changes within the cell. The sequence is that of Large-conductance mechanosensitive channel from Haemophilus influenzae (strain PittEE).